The chain runs to 570 residues: Peptidyl-prolyl cis-trans isomerase FKBP9 (570 aa).

The first 24 residues, 1 to 24 (MALGARGWRRRSLLLLLLWVTGQA), serve as a signal peptide directing secretion. 4 PPIase FKBP-type domains span residues 54–142 (GDFV…VDIW), 166–254 (SDFV…LDLH), 278–365 (GDFL…IDFH), and 389–477 (GDYL…LELV). 4 N-linked (GlcNAc...) asparagine glycosylation sites follow: N174, N286, N302, and N397. 2 EF-hand domains span residues 488-523 (WNGE…QVAT) and 533-568 (NAEM…AKHD). Ca(2+) is bound by residues D501, D503, N505, E507, E512, D546, N548, D550, K552, and E557. Residues 567–570 (HDEL) carry the Prevents secretion from ER motif.

Post-translationally, phosphorylated. In terms of tissue distribution, predominantly expressed in heart, skeletal muscle, lung, liver and kidney. Lower levels found in brain, spleen and testis.

The protein localises to the endoplasmic reticulum lumen. It carries out the reaction [protein]-peptidylproline (omega=180) = [protein]-peptidylproline (omega=0). Its activity is regulated as follows. Inhibited by FK506. Functionally, PPIases accelerate the folding of proteins during protein synthesis. This chain is Peptidyl-prolyl cis-trans isomerase FKBP9 (Fkbp9), found in Mus musculus (Mouse).